The chain runs to 132 residues: Interleukin-5 (132 aa).

The N-terminal stretch at 1 to 19 (MRMLLHLSILTLACVWTFA) is a signal peptide. Asn-45, Asn-74, and Asn-88 each carry an N-linked (GlcNAc...) asparagine glycan.

The protein belongs to the IL-5 family. Homodimer; disulfide-linked. Interacts with IL5RA. Interacts with CSF2RB.

It localises to the secreted. Its function is as follows. Homodimeric cytokine expressed predominantly by T-lymphocytes and NK cells that plays an important role in the survival, differentiation, and chemotaxis of eosinophils. Also acts on activated and resting B-cells to induce immunoglobulin production, growth, and differentiation. Mechanistically, exerts its biological effects through a receptor composed of IL5RA subunit and the cytokine receptor common subunit beta/CSF2RB. Binding to the receptor leads to activation of various kinases including LYN, SYK and JAK2 and thereby propagates signals through the RAS-MAPK and JAK-STAT5 pathways respectively. The protein is Interleukin-5 (IL5) of Sigmodon hispidus (Hispid cotton rat).